The primary structure comprises 308 residues: MNPVVVVHGGGASNISKDRKERVRQGILRAATVGYNILKQGGSAVDAVEGAVTVLEDDPDFNAGCGSVLNENGEVEMDASIMNGKDLSAGAVSAVRCIANPIKLARLVMDKTPHCFLTDQGAARFAAANGIPTIPGQQLVTERSRKRLEKEKLEKDAQKPDCQKNLGTVGAVALDCQGNLAYATSTGGIVNKMPGRVGDTPCVGSGGYADNDIGAVSTTGHGESILKVNLARLALFHVEQGKSLEEAANASLGHMKSKVKGVGGIIMVNKAGEWAVKWTSTSMPWAAAKDGKLHSGIDFGDTSIIDLS.

Met1 is modified (N-acetylmethionine). Catalysis depends on Thr168, which acts as the Nucleophile. Residues 196–199 (RVGD) and 219–222 (TGHG) each bind substrate.

The protein belongs to the Ntn-hydrolase family. Heterodimer of an alpha and beta chain produced by autocleavage. This heterodimer may then dimerize in turn, giving rise to a heterotetramer. Post-translationally, cleaved into an alpha and beta chain by autocatalysis; this activates the enzyme. The N-terminal residue of the beta subunit is responsible for the nucleophile hydrolase activity.

It is found in the cytoplasm. It catalyses the reaction L-asparagine + H2O = L-aspartate + NH4(+). The catalysed reaction is Cleavage of a beta-linked Asp residue from the N-terminus of a polypeptide.. Its function is as follows. Has both L-asparaginase and beta-aspartyl peptidase activity. May be involved in the production of L-aspartate, which can act as an excitatory neurotransmitter in some brain regions. Is highly active with L-Asp beta-methyl ester. Besides, has catalytic activity toward beta-aspartyl dipeptides and their methyl esters, including beta-L-Asp-L-Phe, beta-L-Asp-L-Phe methyl ester (aspartame), beta-L-Asp-L-Ala, beta-L-Asp-L-Leu and beta-L-Asp-L-Lys. Does not have aspartylglucosaminidase activity and is inactive toward GlcNAc-L-Asn. Likewise, has no activity toward glutamine. The protein is Isoaspartyl peptidase/L-asparaginase (ASRGL1) of Bos taurus (Bovine).